The sequence spans 255 residues: Imidazole glycerol phosphate synthase subunit HisF (255 aa).

Residues Asp12 and Asp131 contribute to the active site.

It belongs to the HisA/HisF family. Heterodimer of HisH and HisF.

Its subcellular location is the cytoplasm. The catalysed reaction is 5-[(5-phospho-1-deoxy-D-ribulos-1-ylimino)methylamino]-1-(5-phospho-beta-D-ribosyl)imidazole-4-carboxamide + L-glutamine = D-erythro-1-(imidazol-4-yl)glycerol 3-phosphate + 5-amino-1-(5-phospho-beta-D-ribosyl)imidazole-4-carboxamide + L-glutamate + H(+). It functions in the pathway amino-acid biosynthesis; L-histidine biosynthesis; L-histidine from 5-phospho-alpha-D-ribose 1-diphosphate: step 5/9. Its function is as follows. IGPS catalyzes the conversion of PRFAR and glutamine to IGP, AICAR and glutamate. The HisF subunit catalyzes the cyclization activity that produces IGP and AICAR from PRFAR using the ammonia provided by the HisH subunit. This Salinispora arenicola (strain CNS-205) protein is Imidazole glycerol phosphate synthase subunit HisF.